A 337-amino-acid chain; its full sequence is tRNA-cytidine(32) 2-sulfurtransferase (337 aa).

The PP-loop motif signature appears at 71-76 (SGGKDS). [4Fe-4S] cluster contacts are provided by C146, C149, and C237.

The protein belongs to the TtcA family. As to quaternary structure, homodimer. Mg(2+) is required as a cofactor. It depends on [4Fe-4S] cluster as a cofactor.

It localises to the cytoplasm. The enzyme catalyses cytidine(32) in tRNA + S-sulfanyl-L-cysteinyl-[cysteine desulfurase] + AH2 + ATP = 2-thiocytidine(32) in tRNA + L-cysteinyl-[cysteine desulfurase] + A + AMP + diphosphate + H(+). It participates in tRNA modification. Its function is as follows. Catalyzes the ATP-dependent 2-thiolation of cytidine in position 32 of tRNA, to form 2-thiocytidine (s(2)C32). The sulfur atoms are provided by the cysteine/cysteine desulfurase (IscS) system. This Burkholderia vietnamiensis (strain G4 / LMG 22486) (Burkholderia cepacia (strain R1808)) protein is tRNA-cytidine(32) 2-sulfurtransferase.